The chain runs to 1738 residues: Interaptin (1738 aa).

The interval methionine 1 to tyrosine 248 is actin-binding. The Cytoplasmic portion of the chain corresponds to methionine 1–proline 1705. Calponin-homology (CH) domains are found at residues isoleucine 22–glutamine 128 and threonine 146–glutamine 249. 3 disordered regions span residues serine 285–serine 350, isoleucine 1068–aspartate 1090, and leucine 1589–isoleucine 1627. Residues glutamine 292–asparagine 301 are compositionally biased toward low complexity. Positions leucine 302 to lysine 316 are enriched in polar residues. 3 stretches are compositionally biased toward low complexity: residues serine 317 to threonine 344, isoleucine 1068 to leucine 1086, and leucine 1589 to proline 1617. Residues glutamate 373–glutamine 1598 adopt a coiled-coil conformation. The chain crosses the membrane as a helical; Anchor for type IV membrane protein span at residues isoleucine 1706–phenylalanine 1726.

It belongs to the alpha-actinin family.

It is found in the nucleus membrane. The protein resides in the endoplasmic reticulum membrane. Its subcellular location is the golgi apparatus. The protein localises to the golgi stack membrane. It localises to the cytoplasm. It is found in the cytoskeleton. The protein resides in the microtubule organizing center. Its subcellular location is the centrosome. May function as linker between cellular membranes and the actin cytoskeleton. Required for normal development of fruiting bodies. The protein is Interaptin (abpD) of Dictyostelium discoideum (Social amoeba).